The following is a 169-amino-acid chain: Calcium-binding protein G (169 aa).

EF-hand domains follow at residues 9 to 44, 60 to 83, 92 to 127, and 133 to 162; these read KIFQDIQNFIQDYDLNKDYSVTSSEIYQSFLKKMNG, VDMDNDGKFSYYEISKYCADQAKK, AALADVEALLLRLDKDKDKKLNKTEFVKFFKEQGYN, and DYVLKIIDLDKDGYVSASELQEWFKQKRLA. Asp-105, Asp-107, Asp-109, Lys-111, Glu-116, Asp-140, Asp-142, Asp-144, Tyr-146, and Glu-151 together coordinate Ca(2+).

The sequence is that of Calcium-binding protein G (cbpG) from Dictyostelium discoideum (Social amoeba).